The primary structure comprises 99 residues: Plastocyanin (99 aa).

The Plastocyanin-like domain occupies 1–99; that stretch reads AEVLLGSSDG…AGMVGKVTVN (99 aa). Cu cation is bound by residues histidine 37, cysteine 84, histidine 87, and methionine 92.

This sequence belongs to the plastocyanin family. It depends on Cu(2+) as a cofactor.

The protein localises to the plastid. It is found in the chloroplast thylakoid membrane. Functionally, participates in electron transfer between P700 and the cytochrome b6-f complex in photosystem I. In Lactuca sativa (Garden lettuce), this protein is Plastocyanin (PETE).